The chain runs to 288 residues: Beta-lactamase PSE-4 (288 aa).

A signal peptide spans 1-17; that stretch reads MKFLLAFSLLIPSVVFA. S65 (acyl-ester intermediate) is an active-site residue. The cysteines at positions 72 and 118 are disulfide-linked. 229-231 is a binding site for substrate; sequence RSG.

It belongs to the class-A beta-lactamase family.

The catalysed reaction is a beta-lactam + H2O = a substituted beta-amino acid. In terms of biological role, hydrolyzes both carbenicillin and oxacillin. This chain is Beta-lactamase PSE-4 (pse4), found in Pseudomonas aeruginosa.